A 279-amino-acid polypeptide reads, in one-letter code: MRNKAVLDLHLVSDSTCETVIAVARSAVEHFKSLEVNEFVWSLVGSKRQVDKVMLNINPERHNLIMYTVVDDDLRKYLKEKATAQSVRCIPVLAHVIREISCYLQVTKDPNAHPHKLGDEYFNRIDAINYTISHDDGQNLWDIDQADIIIVGVSRTSKSPTSIYLAYRGYRVVNIPLVCSVQLPVDPATIADKLVVGLTIDADRLIQIRRNRLISMKHQENCNYVSYEQVVEEINEMKKICAKNRWPTIDVTQKSVEEIAATIIQFFNRKNNRTGDALY.

152–159 contacts ADP; it reads GVSRTSKS.

It belongs to the pyruvate, phosphate/water dikinase regulatory protein family. PDRP subfamily.

The enzyme catalyses N(tele)-phospho-L-histidyl/L-threonyl-[pyruvate, phosphate dikinase] + ADP = N(tele)-phospho-L-histidyl/O-phospho-L-threonyl-[pyruvate, phosphate dikinase] + AMP + H(+). The catalysed reaction is N(tele)-phospho-L-histidyl/O-phospho-L-threonyl-[pyruvate, phosphate dikinase] + phosphate + H(+) = N(tele)-phospho-L-histidyl/L-threonyl-[pyruvate, phosphate dikinase] + diphosphate. Bifunctional serine/threonine kinase and phosphorylase involved in the regulation of the pyruvate, phosphate dikinase (PPDK) by catalyzing its phosphorylation/dephosphorylation. This is Putative pyruvate, phosphate dikinase regulatory protein from Anaplasma marginale (strain Florida).